The following is a 332-amino-acid chain: Succinylglutamate desuccinylase (332 aa).

The Zn(2+) site is built by H59, E62, and H151. E215 is an active-site residue.

This sequence belongs to the AspA/AstE family. Succinylglutamate desuccinylase subfamily. The cofactor is Zn(2+).

The enzyme catalyses N-succinyl-L-glutamate + H2O = L-glutamate + succinate. The protein operates within amino-acid degradation; L-arginine degradation via AST pathway; L-glutamate and succinate from L-arginine: step 5/5. In terms of biological role, transforms N(2)-succinylglutamate into succinate and glutamate. The polypeptide is Succinylglutamate desuccinylase (Pseudomonas aeruginosa (strain LESB58)).